A 938-amino-acid chain; its full sequence is ATP-dependent RNA helicase DDX42 (938 aa).

Gly residues predominate over residues 1–18; the sequence is MNWNKGGPGTKRGFGFGG. The tract at residues 1-114 is disordered; sequence MNWNKGGPGT…KPVDSDSDDD (114 aa). Lysine 5 carries the N6-acetyllysine modification. Arginine 12 bears the Omega-N-methylarginine mark. Residues 35–52 are compositionally biased toward low complexity; that stretch reads SHSAFGATSSSSGFGKSA. Phosphoserine is present on serine 58. Residues 70–84 are compositionally biased toward acidic residues; that stretch reads DEENAYFEDEEEDSS. Serine 96, serine 104, serine 109, and serine 111 each carry phosphoserine. The stretch at 116–157 forms a coiled coil; the sequence is LEAFMAEVEDQAARDMKRLEEKDKERKNVKGIRDDIEEEDDQ. Residues 182 to 203 form a disordered region; sequence EYDSDGNPIAPTKKIIDPLPPI. Serine 185 is modified (phosphoserine). A Q motif motif is present at residues 253–281; sequence SSFAHFGFDEQLMHQIRKSEYTQPTPIQC. One can recognise a Helicase ATP-binding domain in the interval 284 to 459; sequence VPVALSGRDM…RDILIDPIRV (176 aa). Residue 297-304 participates in ATP binding; the sequence is AKTGSGKT. The DEAD box signature appears at 407–410; that stretch reads DEAD. One can recognise a Helicase C-terminal domain in the interval 487–632; that stretch reads WLTRRLVEFT…HVSKELLDLA (146 aa). 2 stretches are compositionally biased toward polar residues: residues 737-757 and 786-798; these read LNSVPTNSAQQGHNSPDSPVT and GVNNTASGNNSRE. Positions 737 to 938 are disordered; it reads LNSVPTNSAQ…PKRKKSRWDS (202 aa). A necessary for interaction with TP53BP2 region spans residues 738–833; it reads NSVPTNSAQQ…TGNRHSDSPR (96 aa). Serine 754 carries the post-translational modification Phosphoserine. The span at 820 to 920 shows a compositional bias: basic and acidic residues; it reads SHGETGNRHS…KVDSKTDKTA (101 aa). Lysine 899 is covalently cross-linked (Glycyl lysine isopeptide (Lys-Gly) (interchain with G-Cter in SUMO2)).

Belongs to the DEAD box helicase family. DDX42 subfamily. As to quaternary structure, transient component of the SF3B subcomplex of the 17S U2 SnRNP complex. Interacts (via the C-terminus) with TP53BP2; the interaction is not inhibitied by TP53BP2 ubiquitination and is independent of p53/TP53. In terms of tissue distribution, expressed in several cell lines (at protein level). Expressed in liver, lung, tonsil, thymus, muscle and pancreatic islets.

The protein resides in the cytoplasm. Its subcellular location is the nucleus. It localises to the cajal body. It is found in the nucleus speckle. It carries out the reaction ATP + H2O = ADP + phosphate + H(+). Its function is as follows. ATP-dependent RNA helicase that binds to partially double-stranded RNAs (dsRNAs) in order to unwind RNA secondary structures. Unwinding is promoted in the presence of single-strand binding proteins. Also mediates RNA duplex formation thereby displacing the single-strand RNA binding protein. ATP and ADP modulate its activity: ATP binding and hydrolysis by DDX42 triggers RNA strand separation, whereas the ADP-bound form of the protein triggers annealing of complementary RNA strands. Required for assembly of the 17S U2 SnRNP complex of the spliceosome, a large ribonucleoprotein complex that removes introns from transcribed pre-mRNAs: DDX42 associates transiently with the SF3B subcomplex of the 17S U2 SnRNP complex and is released after fulfilling its role in the assembly of 17S U2 SnRNP. Involved in the survival of cells by interacting with TP53BP2 and thereby counteracting the apoptosis-stimulating activity of TP53BP2. Relocalizes TP53BP2 to the cytoplasm. The chain is ATP-dependent RNA helicase DDX42 from Homo sapiens (Human).